Reading from the N-terminus, the 135-residue chain is Sex-regulated protein janus-A (135 aa).

A substrate-binding site is contributed by Lys-37. The Proton acceptor role is filled by His-63. Position 104–106 (104–106 (SQG)) interacts with substrate.

Belongs to the janus family.

In terms of biological role, janA and janB regulate somatic sex differentiation. The sequence is that of Sex-regulated protein janus-A (janA) from Drosophila yakuba (Fruit fly).